The sequence spans 54 residues: Ovomucoid (54 aa).

The Kazal-like domain maps to 4–54 (VDCSEYPKPACTLEYRPLCGSDSKTYGNKCNFCNAVVESNGTLTLSHFGKC). 3 disulfides stabilise this stretch: cysteine 6–cysteine 36, cysteine 14–cysteine 33, and cysteine 22–cysteine 54. Asparagine 43 carries an N-linked (GlcNAc...) asparagine glycan.

Its subcellular location is the secreted. The polypeptide is Ovomucoid (Alectoris chukar (Chukar partridge)).